The chain runs to 304 residues: D-alanine--D-alanine ligase (304 aa).

Positions 103–299 constitute an ATP-grasp domain; the sequence is KLIWQALGLP…FADLCIEILK (197 aa). ATP is bound at residue 129–184; it reads EEKLGLPMFVKPAAEGSSVGVVKVKEKGRLKSVYEELKHLQGEIIAERFIGGGEYS. 3 residues coordinate Mg(2+): Asp253, Glu266, and Asn268.

The protein belongs to the D-alanine--D-alanine ligase family. Requires Mg(2+) as cofactor. Mn(2+) is required as a cofactor.

It localises to the cytoplasm. The enzyme catalyses 2 D-alanine + ATP = D-alanyl-D-alanine + ADP + phosphate + H(+). It participates in cell wall biogenesis; peptidoglycan biosynthesis. Functionally, cell wall formation. The polypeptide is D-alanine--D-alanine ligase (Neisseria gonorrhoeae (strain ATCC 700825 / FA 1090)).